We begin with the raw amino-acid sequence, 514 residues long: MTNIQAFMKNFLGASPEWYKLAIVVFLIINPIVFFFISPFIAGWLLVAEFIFTLAMALKCYPLQPGGLLAIEAIIIGMTNAKHVKAEIMANFEVILLLIFMVAGIFFMKQLLLYVFTKLLVKIRSKIALSIAFCFSAAFLSAFLDALTVVAVIISVAMGFYGVYHKVASGNNLIDAVDISDDRKIIEQQHEILEKFRAFLRSLMMHAGVGTALGGVMTVVGEPQNLIIAEQAKWNFMEFFLRMAPVTIPVFICGLLTCFLVEKFKLFGYGEKLPDEVWKVLSDLDRTNSEKMSKQDKIKLGMQALIAIWLILGLAFHLAAVGLIGLSIIIFATSFTGVTDEHTIGKAFQESLPFTALLVVFFSVVAVIIDQKLFSPIIHFVLSAEENTQLALFYLFNGLLSSISDNVFVATVYINEAKAALTNGVIAPHQFELLSVAINTGTNLPSVATPNGQAAFLFLLTSSISPLIRLSYGRMVYMALPYTIVLSIIGLLAIEFILPAATIWLASLGLILPI.

Transmembrane regions (helical) follow at residues 21 to 41 (LAIV…SPFI), 43 to 63 (GWLL…CYPL), 88 to 108 (IMAN…IFFM), 143 to 163 (FLDA…FYGV), 203 to 223 (LMMH…VGEP), 239 to 259 (FFLR…LTCF), 304 to 324 (ALIA…VGLI), 349 to 369 (QESL…AVII), 390 to 410 (LALF…VFVA), 448 to 468 (ATPN…SPLI), and 484 to 504 (IVLS…ATIW).

This sequence belongs to the NhaB Na(+)/H(+) (TC 2.A.34) antiporter family.

The protein localises to the cell inner membrane. The catalysed reaction is 2 Na(+)(in) + 3 H(+)(out) = 2 Na(+)(out) + 3 H(+)(in). In terms of biological role, na(+)/H(+) antiporter that extrudes sodium in exchange for external protons. The sequence is that of Na(+)/H(+) antiporter NhaB from Haemophilus influenzae (strain 86-028NP).